The chain runs to 253 residues: Indole-3-glycerol phosphate synthase (253 aa).

This sequence belongs to the TrpC family.

The enzyme catalyses 1-(2-carboxyphenylamino)-1-deoxy-D-ribulose 5-phosphate + H(+) = (1S,2R)-1-C-(indol-3-yl)glycerol 3-phosphate + CO2 + H2O. Its pathway is amino-acid biosynthesis; L-tryptophan biosynthesis; L-tryptophan from chorismate: step 4/5. The polypeptide is Indole-3-glycerol phosphate synthase (Bacillus cereus (strain ATCC 10987 / NRS 248)).